The following is a 34-amino-acid chain: Cytochrome b6-f complex subunit 7 (34 aa).

The chain crosses the membrane as a helical span at residues 9–29 (ALLSFGLIFVGWALGALLLKI).

This sequence belongs to the PetM family. The 4 large subunits of the cytochrome b6-f complex are cytochrome b6, subunit IV (17 kDa polypeptide, PetD), cytochrome f and the Rieske protein, while the 4 small subunits are PetG, PetL, PetM and PetN. The complex functions as a dimer.

The protein resides in the cellular thylakoid membrane. Component of the cytochrome b6-f complex, which mediates electron transfer between photosystem II (PSII) and photosystem I (PSI), cyclic electron flow around PSI, and state transitions. The protein is Cytochrome b6-f complex subunit 7 of Nostoc sp. (strain PCC 7120 / SAG 25.82 / UTEX 2576).